Here is a 480-residue protein sequence, read N- to C-terminus: Porphobilinogen deaminase, chloroplastic (480 aa).

Residues 1 to 139 (MYCGRYETIG…VSGGRIWSLA (139 aa)) constitute a chloroplast transit peptide. S-(dipyrrolylmethanemethyl)cysteine is present on cysteine 395.

The protein belongs to the HMBS family. Requires dipyrromethane as cofactor.

It localises to the plastid. The protein localises to the chloroplast. The catalysed reaction is 4 porphobilinogen + H2O = hydroxymethylbilane + 4 NH4(+). It participates in porphyrin-containing compound metabolism; protoporphyrin-IX biosynthesis; coproporphyrinogen-III from 5-aminolevulinate: step 2/4. The protein operates within porphyrin-containing compound metabolism; chlorophyll biosynthesis. Tetrapolymerization of the monopyrrole PBG into the hydroxymethylbilane pre-uroporphyrinogen in several discrete steps. The chain is Porphobilinogen deaminase, chloroplastic from Euglena gracilis.